Here is a 297-residue protein sequence, read N- to C-terminus: uncharacterized protein (297 aa).

Residues 128-156 (RGVIVEQESEAAAEKDELESLAKVLESDF) adopt a coiled-coil conformation.

This is an uncharacterized protein from Bacillus subtilis (strain 168).